A 399-amino-acid chain; its full sequence is Fe-coproporphyrin III synthase (399 aa).

Residues K36–P253 enclose the Radical SAM core domain. [4Fe-4S] cluster contacts are provided by C50, C54, and C57.

It belongs to the radical SAM superfamily. The cofactor is [4Fe-4S] cluster.

It catalyses the reaction 12,18-didecarboxysiroheme + 2 AH2 + 2 S-adenosyl-L-methionine = Fe-coproporphyrin III + 2 5'-deoxyadenosine + 2 L-methionine + 2 acetate + 2 A + 2 H(+). It participates in porphyrin-containing compound metabolism; protoheme biosynthesis. Functionally, involved in siroheme-dependent heme b biosynthesis. Catalyzes the conversion of didecarboxysiroheme into Fe-coproporphyrin III by oxidative loss of two acetic acid side chains. This is Fe-coproporphyrin III synthase from Methanosarcina barkeri (strain Fusaro / DSM 804).